A 235-amino-acid chain; its full sequence is uncharacterized protein (235 aa).

A run of 3 helical transmembrane segments spans residues 41–61, 71–91, and 129–149; these read IFWHPLYLAVFGLVFMGIYRL, LRTFVLLILVSAVFLTLIEFP, and IGIIGILPANAPGAYQNTPTI.

Its subcellular location is the membrane. This is an uncharacterized protein from Schizosaccharomyces pombe (strain 972 / ATCC 24843) (Fission yeast).